Here is a 173-residue protein sequence, read N- to C-terminus: Crossover junction endodeoxyribonuclease RuvC (173 aa).

Residues D11, E71, and D143 contribute to the active site. The Mg(2+) site is built by D11, E71, and D143.

The protein belongs to the RuvC family. As to quaternary structure, homodimer which binds Holliday junction (HJ) DNA. The HJ becomes 2-fold symmetrical on binding to RuvC with unstacked arms; it has a different conformation from HJ DNA in complex with RuvA. In the full resolvosome a probable DNA-RuvA(4)-RuvB(12)-RuvC(2) complex forms which resolves the HJ. Mg(2+) is required as a cofactor.

The protein resides in the cytoplasm. It carries out the reaction Endonucleolytic cleavage at a junction such as a reciprocal single-stranded crossover between two homologous DNA duplexes (Holliday junction).. Functionally, the RuvA-RuvB-RuvC complex processes Holliday junction (HJ) DNA during genetic recombination and DNA repair. Endonuclease that resolves HJ intermediates. Cleaves cruciform DNA by making single-stranded nicks across the HJ at symmetrical positions within the homologous arms, yielding a 5'-phosphate and a 3'-hydroxyl group; requires a central core of homology in the junction. The consensus cleavage sequence is 5'-(A/T)TT(C/G)-3'. Cleavage occurs on the 3'-side of the TT dinucleotide at the point of strand exchange. HJ branch migration catalyzed by RuvA-RuvB allows RuvC to scan DNA until it finds its consensus sequence, where it cleaves and resolves the cruciform DNA. The protein is Crossover junction endodeoxyribonuclease RuvC of Brucella suis biovar 1 (strain 1330).